A 251-amino-acid polypeptide reads, in one-letter code: Methionine aminopeptidase (251 aa).

His76 contacts substrate. Asp93, Asp104, and His168 together coordinate a divalent metal cation. His175 contacts substrate. Residues Glu202 and Glu233 each coordinate a divalent metal cation.

The protein belongs to the peptidase M24A family. Methionine aminopeptidase type 1 subfamily. As to quaternary structure, monomer. The cofactor is Co(2+). Requires Zn(2+) as cofactor. Mn(2+) serves as cofactor. It depends on Fe(2+) as a cofactor.

It catalyses the reaction Release of N-terminal amino acids, preferentially methionine, from peptides and arylamides.. In terms of biological role, removes the N-terminal methionine from nascent proteins. The N-terminal methionine is often cleaved when the second residue in the primary sequence is small and uncharged (Met-Ala-, Cys, Gly, Pro, Ser, Thr, or Val). Requires deformylation of the N(alpha)-formylated initiator methionine before it can be hydrolyzed. This chain is Methionine aminopeptidase, found in Staphylococcus epidermidis (strain ATCC 35984 / DSM 28319 / BCRC 17069 / CCUG 31568 / BM 3577 / RP62A).